A 119-amino-acid polypeptide reads, in one-letter code: Large ribosomal subunit protein uL14 (119 aa).

Belongs to the universal ribosomal protein uL14 family. As to quaternary structure, part of the 50S ribosomal subunit. Forms a cluster with proteins L3 and L19. In the 70S ribosome, L14 and L19 interact and together make contacts with the 16S rRNA in bridges B5 and B8.

Its function is as follows. Binds to 23S rRNA. Forms part of two intersubunit bridges in the 70S ribosome. The sequence is that of Large ribosomal subunit protein uL14 from Anaplasma marginale (strain St. Maries).